The sequence spans 285 residues: Transmembrane protein DDB_G0269096 (285 aa).

Disordered regions lie at residues 1–25 (MEDRNLERNIGSDISSSSSIDMSQS) and 59–87 (SFENGENNNNNNNNNNNNNNNNNNNNNKN). Low complexity-rich tracts occupy residues 12-25 (SDISSSSSIDMSQS) and 65-85 (NNNNNNNNNNNNNNNNNNNNN). 5 consecutive transmembrane segments (helical) span residues 124-144 (LEEIGWTWLASFTGILVLALI), 152-172 (AQMQVLIGSFAASAVIIFGVP), 182-202 (LIMGHFLSAVVGSVIRVALVY), 205-225 (ANFEVACALAVSLSIMLMQFT), and 250-270 (FYFIFVPILSGALIMLLTALV).

It is found in the membrane. This Dictyostelium discoideum (Social amoeba) protein is Transmembrane protein DDB_G0269096.